The chain runs to 225 residues: Protein YIP4 (225 aa).

Residues serine 27 and serine 28 each carry the phosphoserine modification. A run of 5 helical transmembrane segments spans residues 91-111, 118-138, 154-176, 180-199, and 205-225; these read WDLWGPLIFSLVIALALALST, SVFTVVVALIWFGEAVCSLNI, LGYSSFPLMIASIVCAFVPLIFI, VIVAMYAWTLFAAMGVLQNS, and KLLAVYPLFLFYFSLAWIIFL.

It belongs to the YIP1 family. As to quaternary structure, interacts with the YIP1 family members yip1 and yip5, and with several Rab GTPases.

It is found in the membrane. May be involved in proper membrane localization of Rab GTPases. This Schizosaccharomyces pombe (strain 972 / ATCC 24843) (Fission yeast) protein is Protein YIP4.